Here is a 423-residue protein sequence, read N- to C-terminus: NADH-quinone oxidoreductase subunit F (423 aa).

Residue G54–G63 coordinates NAD(+). An FMN-binding site is contributed by G166–S213. Residues C344, C347, C350, and C390 each contribute to the [4Fe-4S] cluster site.

Belongs to the complex I 51 kDa subunit family. FMN serves as cofactor. [4Fe-4S] cluster is required as a cofactor.

The enzyme catalyses a quinone + NADH + 5 H(+)(in) = a quinol + NAD(+) + 4 H(+)(out). NDH-1 shuttles electrons from NADH, via FMN and iron-sulfur (Fe-S) centers, to quinones in the respiratory chain. Couples the redox reaction to proton translocation (for every two electrons transferred, four hydrogen ions are translocated across the cytoplasmic membrane), and thus conserves the redox energy in a proton gradient. The polypeptide is NADH-quinone oxidoreductase subunit F (nuoF) (Rickettsia akari (strain Hartford)).